The sequence spans 194 residues: A-type ATP synthase subunit E (194 aa).

The protein belongs to the V-ATPase E subunit family. As to quaternary structure, has multiple subunits with at least A(3), B(3), C, D, E, F, H, I and proteolipid K(x).

It localises to the cell membrane. Component of the A-type ATP synthase that produces ATP from ADP in the presence of a proton gradient across the membrane. The protein is A-type ATP synthase subunit E of Haloferax volcanii (strain ATCC 29605 / DSM 3757 / JCM 8879 / NBRC 14742 / NCIMB 2012 / VKM B-1768 / DS2) (Halobacterium volcanii).